A 166-amino-acid chain; its full sequence is Transcription elongation factor GreA (166 aa).

This sequence belongs to the GreA/GreB family.

Necessary for efficient RNA polymerase transcription elongation past template-encoded arresting sites. The arresting sites in DNA have the property of trapping a certain fraction of elongating RNA polymerases that pass through, resulting in locked ternary complexes. Cleavage of the nascent transcript by cleavage factors such as GreA or GreB allows the resumption of elongation from the new 3'terminus. GreA releases sequences of 2 to 3 nucleotides. This chain is Transcription elongation factor GreA, found in Anaeromyxobacter sp. (strain K).